Here is a 191-residue protein sequence, read N- to C-terminus: Xanthine phosphoribosyltransferase (191 aa).

Leu-20 and Asn-27 together coordinate xanthine. 128 to 132 (ANGQA) serves as a coordination point for 5-phospho-alpha-D-ribose 1-diphosphate. Lys-156 is a xanthine binding site.

This sequence belongs to the purine/pyrimidine phosphoribosyltransferase family. Xpt subfamily. Homodimer.

It localises to the cytoplasm. The catalysed reaction is XMP + diphosphate = xanthine + 5-phospho-alpha-D-ribose 1-diphosphate. Its pathway is purine metabolism; XMP biosynthesis via salvage pathway; XMP from xanthine: step 1/1. Its function is as follows. Converts the preformed base xanthine, a product of nucleic acid breakdown, to xanthosine 5'-monophosphate (XMP), so it can be reused for RNA or DNA synthesis. The polypeptide is Xanthine phosphoribosyltransferase (Acinetobacter baumannii (strain AB307-0294)).